The sequence spans 422 residues: Phosphoglycerate kinase (422 aa).

Substrate-binding positions include D24–N26, H64–R67, R129, and R171. Residues K222, G309, E340, and D370–T373 contribute to the ATP site.

This sequence belongs to the phosphoglycerate kinase family. In terms of assembly, monomer.

It is found in the cytoplasm. The catalysed reaction is (2R)-3-phosphoglycerate + ATP = (2R)-3-phospho-glyceroyl phosphate + ADP. Its pathway is carbohydrate degradation; glycolysis; pyruvate from D-glyceraldehyde 3-phosphate: step 2/5. This Ureaplasma parvum serovar 3 (strain ATCC 700970) protein is Phosphoglycerate kinase (pgk).